The chain runs to 311 residues: 4-diphosphocytidyl-2-C-methyl-D-erythritol kinase (311 aa).

Lys-11 is an active-site residue. ATP is bound at residue 94–104 (PVAAGLAGGSA). Asp-136 is a catalytic residue.

The protein belongs to the GHMP kinase family. IspE subfamily.

The catalysed reaction is 4-CDP-2-C-methyl-D-erythritol + ATP = 4-CDP-2-C-methyl-D-erythritol 2-phosphate + ADP + H(+). It participates in isoprenoid biosynthesis; isopentenyl diphosphate biosynthesis via DXP pathway; isopentenyl diphosphate from 1-deoxy-D-xylulose 5-phosphate: step 3/6. In terms of biological role, catalyzes the phosphorylation of the position 2 hydroxy group of 4-diphosphocytidyl-2C-methyl-D-erythritol. This chain is 4-diphosphocytidyl-2-C-methyl-D-erythritol kinase, found in Synechococcus sp. (strain JA-2-3B'a(2-13)) (Cyanobacteria bacterium Yellowstone B-Prime).